A 263-amino-acid polypeptide reads, in one-letter code: tRNA (guanine-N(7)-)-methyltransferase (263 aa).

The tract at residues Met-1–Ser-39 is disordered. The S-adenosyl-L-methionine site is built by Glu-82, Asp-107, Asn-136, and Asp-159. Asp-159 is an active-site residue. Residues Lys-163, Asp-195, and Thr-232–Glu-235 each bind substrate.

Belongs to the class I-like SAM-binding methyltransferase superfamily. TrmB family.

The catalysed reaction is guanosine(46) in tRNA + S-adenosyl-L-methionine = N(7)-methylguanosine(46) in tRNA + S-adenosyl-L-homocysteine. It participates in tRNA modification; N(7)-methylguanine-tRNA biosynthesis. Functionally, catalyzes the formation of N(7)-methylguanine at position 46 (m7G46) in tRNA. The protein is tRNA (guanine-N(7)-)-methyltransferase of Mycobacterium bovis (strain ATCC BAA-935 / AF2122/97).